We begin with the raw amino-acid sequence, 360 residues long: Phosphoserine aminotransferase (360 aa).

Arg41 lines the L-glutamate pocket. Pyridoxal 5'-phosphate-binding residues include Trp101, Thr152, Asp172, and Gln195. Lys196 is modified (N6-(pyridoxal phosphate)lysine). A pyridoxal 5'-phosphate-binding site is contributed by 237 to 238 (NT).

Belongs to the class-V pyridoxal-phosphate-dependent aminotransferase family. SerC subfamily. In terms of assembly, homodimer. Requires pyridoxal 5'-phosphate as cofactor.

The protein resides in the cytoplasm. The enzyme catalyses O-phospho-L-serine + 2-oxoglutarate = 3-phosphooxypyruvate + L-glutamate. The catalysed reaction is 4-(phosphooxy)-L-threonine + 2-oxoglutarate = (R)-3-hydroxy-2-oxo-4-phosphooxybutanoate + L-glutamate. The protein operates within amino-acid biosynthesis; L-serine biosynthesis; L-serine from 3-phospho-D-glycerate: step 2/3. Its pathway is cofactor biosynthesis; pyridoxine 5'-phosphate biosynthesis; pyridoxine 5'-phosphate from D-erythrose 4-phosphate: step 3/5. Catalyzes the reversible conversion of 3-phosphohydroxypyruvate to phosphoserine and of 3-hydroxy-2-oxo-4-phosphonooxybutanoate to phosphohydroxythreonine. The chain is Phosphoserine aminotransferase from Burkholderia cenocepacia (strain ATCC BAA-245 / DSM 16553 / LMG 16656 / NCTC 13227 / J2315 / CF5610) (Burkholderia cepacia (strain J2315)).